Here is an 873-residue protein sequence, read N- to C-terminus: Zinc fingers and homeoboxes protein 1 (873 aa).

Residues M1–N63 are disordered. Positions Q18–E30 are enriched in acidic residues. T36 carries the post-translational modification Phosphothreonine. Residues S45, S47, and S48 each carry the phosphoserine modification. 2 consecutive C2H2-type zinc fingers follow at residues Y70–H93 and Y102–H125. A Glycyl lysine isopeptide (Lys-Gly) (interchain with G-Cter in SUMO2) cross-link involves residue K159. Phosphoserine is present on S202. Residues S202–T236 form a disordered region. A compositionally biased stretch (basic and acidic residues) spans N212–I221. Positions E223 to T236 are enriched in low complexity. The tract at residues N272–P432 is required for dimerization. Residues N272–F564 are required for interaction with NFYA. The homeobox 1 DNA-binding region spans N284–E346. Residues K441, K454, K485, and K629 each participate in a glycyl lysine isopeptide (Lys-Gly) (interchain with G-Cter in SUMO2) cross-link. DNA-binding regions (homeobox) lie at residues S464 to Q526 and P569 to M630. 2 disordered regions span residues K626–K667 and S732–W769. Position 648 is a phosphoserine (S648). A DNA-binding region (homeobox 4) is located at residues S660–W722. Positions M734 to N768 are required for nuclear localization. Basic residues predominate over residues L740–K764. Phosphoserine is present on S774. The segment at residues K777 to F832 is a DNA-binding region (homeobox 5). Positions I829–D873 are disordered. A compositionally biased stretch (acidic residues) spans L831–T857. The segment at L831–D873 is required for repressor activity. Basic residues predominate over residues H863–D873.

It belongs to the ZHX family. As to quaternary structure, forms homodimers. Also forms heterodimers with ZHX3 which is a prerequisite for repressor activity and with ZHX2. Interacts with NFYA. Interacts with ATF7IP.

The protein localises to the nucleus. Its function is as follows. Acts as a transcriptional repressor. This chain is Zinc fingers and homeoboxes protein 1 (ZHX1), found in Gorilla gorilla gorilla (Western lowland gorilla).